Here is a 378-residue protein sequence, read N- to C-terminus: Zinc finger protein DPF3 (378 aa).

A Glycyl lysine isopeptide (Lys-Gly) (interchain with G-Cter in SUMO2) cross-link involves residue K99. The tract at residues 146-193 (LENDENVEEGNEEEDLEEDVPKRKNRTRGRARGSAGGRRRHDAASQED) is disordered. The segment covering 148–163 (NDENVEEGNEEEDLEE) has biased composition (acidic residues). Basic residues predominate over residues 168–186 (RKNRTRGRARGSAGGRRRH). The C2H2-type zinc-finger motif lies at 198–221 (YVCDICGKRYKNRPGLSYHYAHTH). The disordered stretch occupies residues 225-254 (EEGDEAQDQETRSPPNHRNENHRPQKGPDG). 2 PHD-type zinc fingers span residues 259 to 319 (NNYC…CKSC) and 316 to 366 (CKSC…CWEL). An interaction with HDGFL2 region spans residues 317-332 (KSCILCGTSENDDQLL). Phosphoserine is present on G323.

This sequence belongs to the requiem/DPF family. As to quaternary structure, component of the BAF complex, which includes at least actin (ACTB), ARID1A, ARID1B/BAF250, SMARCA2, SMARCA4/BRG1/BAF190A, ACTL6A/BAF53, ACTL6B/BAF53B, SMARCE1/BAF57, SMARCC1/BAF155, SMARCC2/BAF170, SMARCB1/SNF5/INI1, and one or more of SMARCD1/BAF60A, SMARCD2/BAF60B, or SMARCD3/BAF60C. In muscle cells, the BAF complex also contains DPF3. Interacts with acetylated histones H3 and H4. Component of neuron-specific chromatin remodeling complex (nBAF complex) composed of at least, ARID1A/BAF250A or ARID1B/BAF250B, SMARCD1/BAF60A, SMARCD3/BAF60C, SMARCA2/BRM/BAF190B, SMARCA4/BRG1/BAF190A, SMARCB1/BAF47, SMARCC1/BAF155, SMARCE1/BAF57, SMARCC2/BAF170, DPF1/BAF45B, DPF3/BAF45C, ACTL6B/BAF53B and actin. In terms of assembly, interacts with HDGFL2. Interacts with SMARCA4/BRG1/BAF190A, SMARCC1/BAF155 and SMARCD1/BAF60A. As to expression, expressed in the heart and somites. Expressed in cerebellum and spinal cord, but not in cerebral cortex. Expressed specifically in post-mitotic neurons (at protein level).

It localises to the nucleus. Muscle-specific component of the BAF complex, a multiprotein complex involved in transcriptional activation and repression of select genes by chromatin remodeling (alteration of DNA-nucleosome topology). Specifically binds acetylated lysines on histone 3 and 4 (H3K14ac, H3K9ac, H4K5ac, H4K8ac, H4K12ac, H4K16ac). In the complex, it acts as a tissue-specific anchor between histone acetylations and methylations and chromatin remodeling. It thereby probably plays an essential role in heart and skeletal muscle development. Belongs to the neuron-specific chromatin remodeling complex (nBAF complex). During neural development a switch from a stem/progenitor to a post-mitotic chromatin remodeling mechanism occurs as neurons exit the cell cycle and become committed to their adult state. The transition from proliferating neural stem/progenitor cells to post-mitotic neurons requires a switch in subunit composition of the npBAF and nBAF complexes. As neural progenitors exit mitosis and differentiate into neurons, npBAF complexes which contain ACTL6A/BAF53A and PHF10/BAF45A, are exchanged for homologous alternative ACTL6B/BAF53B and DPF1/BAF45B or DPF3/BAF45C subunits in neuron-specific complexes (nBAF). The npBAF complex is essential for the self-renewal/proliferative capacity of the multipotent neural stem cells. The nBAF complex along with CREST plays a role regulating the activity of genes essential for dendrite growth. Functionally, acts as a regulator of myogenesis in cooperation with HDGFL2. Mediates the interaction of HDGFL2 with the BAF complex. HDGFL2-DPF3a activate myogenic genes by increasing chromatin accessibility through recruitment of SMARCA4/BRG1/BAF190A (ATPase subunit of the BAF complex) to myogenic gene promoters. The chain is Zinc finger protein DPF3 (Dpf3) from Mus musculus (Mouse).